We begin with the raw amino-acid sequence, 294 residues long: Shikimate dehydrogenase (NADP(+)) (294 aa).

Shikimate is bound by residues 25–27 and threonine 72; that span reads SAS. Lysine 76 acts as the Proton acceptor in catalysis. Positions 97 and 112 each coordinate shikimate. NADP(+) is bound by residues 136 to 140 and threonine 234; that span reads GAGGA. Tyrosine 236 lines the shikimate pocket. Position 257 (glycine 257) interacts with NADP(+).

The protein belongs to the shikimate dehydrogenase family. In terms of assembly, homodimer.

It catalyses the reaction shikimate + NADP(+) = 3-dehydroshikimate + NADPH + H(+). It participates in metabolic intermediate biosynthesis; chorismate biosynthesis; chorismate from D-erythrose 4-phosphate and phosphoenolpyruvate: step 4/7. In terms of biological role, involved in the biosynthesis of the chorismate, which leads to the biosynthesis of aromatic amino acids. Catalyzes the reversible NADPH linked reduction of 3-dehydroshikimate (DHSA) to yield shikimate (SA). In Symbiobacterium thermophilum (strain DSM 24528 / JCM 14929 / IAM 14863 / T), this protein is Shikimate dehydrogenase (NADP(+)).